We begin with the raw amino-acid sequence, 271 residues long: Formamidopyrimidine-DNA glycosylase (271 aa).

Catalysis depends on proline 2, which acts as the Schiff-base intermediate with DNA. Residue glutamate 3 is the Proton donor of the active site. Lysine 58 (proton donor; for beta-elimination activity) is an active-site residue. Residues histidine 92, arginine 111, and arginine 152 each coordinate DNA. The segment at 237 to 271 (FVYGRQQQPCKQCGSLLRQTTIRQRTTVWCGHCQG) adopts an FPG-type zinc-finger fold. Catalysis depends on arginine 261, which acts as the Proton donor; for delta-elimination activity.

It belongs to the FPG family. In terms of assembly, monomer. Zn(2+) is required as a cofactor.

The catalysed reaction is Hydrolysis of DNA containing ring-opened 7-methylguanine residues, releasing 2,6-diamino-4-hydroxy-5-(N-methyl)formamidopyrimidine.. The enzyme catalyses 2'-deoxyribonucleotide-(2'-deoxyribose 5'-phosphate)-2'-deoxyribonucleotide-DNA = a 3'-end 2'-deoxyribonucleotide-(2,3-dehydro-2,3-deoxyribose 5'-phosphate)-DNA + a 5'-end 5'-phospho-2'-deoxyribonucleoside-DNA + H(+). In terms of biological role, involved in base excision repair of DNA damaged by oxidation or by mutagenic agents. Acts as a DNA glycosylase that recognizes and removes damaged bases. Has a preference for oxidized purines, such as 7,8-dihydro-8-oxoguanine (8-oxoG). Has AP (apurinic/apyrimidinic) lyase activity and introduces nicks in the DNA strand. Cleaves the DNA backbone by beta-delta elimination to generate a single-strand break at the site of the removed base with both 3'- and 5'-phosphates. In Xylella fastidiosa (strain 9a5c), this protein is Formamidopyrimidine-DNA glycosylase (mutM1).